The sequence spans 190 residues: Somatotropin (190 aa).

His19 is a Zn(2+) binding site. A disulfide bridge connects residues Cys52 and Cys163. Ser105 bears the Phosphoserine mark. Glu172 is a binding site for Zn(2+). A disulfide bridge links Cys180 with Cys188.

This sequence belongs to the somatotropin/prolactin family.

It is found in the secreted. Plays an important role in growth control. Its major role in stimulating body growth is to stimulate the liver and other tissues to secrete IGF1. It stimulates both the differentiation and proliferation of myoblasts. It also stimulates amino acid uptake and protein synthesis in muscle and other tissues. The chain is Somatotropin (GH1) from Balaenoptera borealis (Sei whale).